The primary structure comprises 613 residues: Pentatricopeptide repeat-containing protein At2g02750 (613 aa).

15 PPR repeats span residues Asn30–Val64, Asp65–Ser99, Asn101–Ser126, Ser128–Met162, Glu163–Lys193, Ser194–Glu228, Asn230–Phe264, Glu265–Thr295, Asn297–Pro331, Asp332–Pro366, Ser367–Arg401, Asp402–Lys432, Asp435–Pro469, Ser470–Glu500, and Ser506–Ser539. A type E motif; degenerate region spans residues Val540–Gly613.

It belongs to the PPR family. PCMP-E subfamily.

The protein is Pentatricopeptide repeat-containing protein At2g02750 (PCMP-E22) of Arabidopsis thaliana (Mouse-ear cress).